Here is a 612-residue protein sequence, read N- to C-terminus: MMMNKSKTDWAKDTPCKNITIYGYCKYENDGCIFNHGKPLSTSSNTGGAAAGSAEDSAASGGVTVGNTGKSTFNAKTATSFTPSVAIPDFNNIPSFTPERIVSSPAGDGATAFTPSFNPYGSDSFNPSANVSGPGSAVFAAASGNAGASATAAPRSQSVHVGTGGYLPLAGTAFPTVYPPSHSILQYHLYAPDPPPHLQVPLKANERTPETLFIPNNLREHLLKRNLSALQVFPSDGNLPDIVGDYFGLVPLEFHNRQTGKGRYLGHQNSLYKVFSNFDGKVYIIRRIHDVKTTDVGQISLPFRKWQKVSCPNVVKVKDAFTTLAFGDSSLCVVHDYYPQSNSLYETHVANYTVVPVTQKYLWSYLVQLSNALNEVHRHGLSMNNISLDKVIVTGDPGRIKVGDSAVHDILAFDEGRDIAKEQQADYSAVGALLMDLAQRMLGTRDQPLDSMDIDPLFKRVLAYLLSDEKKTIAEFTALFSHKMLDIISSSQTYSEYIEQHLSRELENGRLFRLMCKLNFIFGRMESSMDIHWSEAGDKFPIILFYDYVFHQVDENGKSVMDLTHVLRCLNKLDTGVSEKIILVTPDEMNCIIISYKELKDSIDSTFRSMTQ.

Residues 10 to 39 (WAKDTPCKNITIYGYCKYENDGCIFNHGKP) form a C3H1-type zinc finger. Low complexity predominate over residues 44 to 62 (SNTGGAAAGSAEDSAASGG). Residues 44-64 (SNTGGAAAGSAEDSAASGGVT) form a disordered region. 2 consecutive short sequence motifs (PABPC-interacting motif-2 (PAM-2)) follow at residues 84 to 104 (SVAI…IVSS) and 111 to 131 (TAFT…SANV). Residues 231–481 (QVFPSDGNLP…TIAEFTALFS (251 aa)) form a pseudokinase domain region. ATP contacts are provided by residues Arg-286, 336–343 (DYYPQSNS), and 389–390 (DK). Positions 482–520 (HKMLDIISSSQTYSEYIEQHLSRELENGRLFRLMCKLNF) form a coiled coil. The tract at residues 521 to 612 (IFGRMESSMD…IDSTFRSMTQ (92 aa)) is knob domain.

Belongs to the protein kinase superfamily. PAN3 family. Homodimer. Forms a heterotrimer with a catalytic subunit PAN2 to form the poly(A)-nuclease (PAN) deadenylation complex. Interacts (via PAM-2 motif) with poly(A)-binding protein PAB1 (via PABC domain), conferring substrate specificity of the enzyme complex.

The protein localises to the cytoplasm. In terms of biological role, regulatory subunit of the poly(A)-nuclease (PAN) deadenylation complex, one of two cytoplasmic mRNA deadenylases involved in mRNA turnover. PAN specifically shortens poly(A) tails of RNA and the activity is stimulated by poly(A)-binding protein PAB1. PAN deadenylation is followed by rapid degradation of the shortened mRNA tails by the CCR4-NOT complex. Deadenylated mRNAs are then degraded by two alternative mechanisms, namely exosome-mediated 3'-5' exonucleolytic degradation, or deadenylation-dependent mRNA decaping and subsequent 5'-3' exonucleolytic degradation by XRN1. May also be involved in post-transcriptional maturation of mRNA poly(A) tails. PAN3 acts as a positive regulator for PAN activity, recruiting the catalytic subunit PAN2 to mRNA via its interaction with RNA and with PAB1. The chain is PAN2-PAN3 deadenylation complex subunit PAN3 from Eremothecium gossypii (strain ATCC 10895 / CBS 109.51 / FGSC 9923 / NRRL Y-1056) (Yeast).